The following is a 502-amino-acid chain: Exodeoxyribonuclease 7 large subunit (502 aa).

Residues 474–495 are compositionally biased toward low complexity; that stretch reads SAPSTTKKSAPKPAAPKAPKTP. The tract at residues 474–502 is disordered; it reads SAPSTTKKSAPKPAAPKAPKTPGEQGSLF.

This sequence belongs to the XseA family. As to quaternary structure, heterooligomer composed of large and small subunits.

The protein localises to the cytoplasm. The catalysed reaction is Exonucleolytic cleavage in either 5'- to 3'- or 3'- to 5'-direction to yield nucleoside 5'-phosphates.. Functionally, bidirectionally degrades single-stranded DNA into large acid-insoluble oligonucleotides, which are then degraded further into small acid-soluble oligonucleotides. This chain is Exodeoxyribonuclease 7 large subunit, found in Ruegeria sp. (strain TM1040) (Silicibacter sp.).